Reading from the N-terminus, the 476-residue chain is MERPNSSVAGLYSGLHGNGSVENLATEEEGLRLLAGAASARFGSSAGRGGGGGEPEGRPGPFNGIVTEPDPEEGTSSGQRGGINGQRGTKRKMENEGEDFLKELTLSLMSRRHHESVWWADLEDEFKNGEMNLLYKYTFEQLKTHWLEAWEDFELALNTFAKVALRPDTIYTIKKTVNIRKCAYVLGNGAVVRFQTCDRVAFNCAMQSLGPGLIGMSGVTFMNVRFVVEGFNGTVFASTTQLTLHGVFFQNCSGICVDSWGRVSARGCTFVACWKGVVGRNKSQMSVKKCVFERCIMAMVVEGQARIRHNAGSDNVCFLLLKGTASVKHNMICGGGHSQLLTCADGNCQALRVFHVVSHPRRPWPVFEHNMLMRCTVHLGARRGMFSPYQSNFCHTKVLMETDAFSRVWWNGVFDLTMELFKVVRYDESKVRCRPCECGANHIRLYPATLNVTEQLRTDHQMMSCLRTDYESSDED.

Disordered regions lie at residues 1 to 20 (MERP…GNGS) and 42 to 95 (FGSS…KMEN). A phosphoserine mark is found at Ser472 and Ser473.

It belongs to the adenoviridae E1B 55 kDa protein family. As to quaternary structure, interacts with host PML-4 and PML-5; this interaction promotes efficient subnuclear targeting of E1B-55K to PML nuclear bodies. Interacts with E4-ORF3 protein. Interacts with E4-ORF6 protein.

Its subcellular location is the host nucleus. It is found in the host cytoplasm. Plays a major role to prevent cellular inhibition of viral genome replication. Assembles an SCF-like E3 ubiquitin ligase complex based on the cellular proteins ELOB, ELOC, CUL5 and RBX1, in cooperation with viral E4orf6. This viral RING-type ligase ubiquitinates cellular substrates and targets them to proteasomal degradation: TP53/p53, LIG4, MRE11-RAD50-NBS1 (MRN) complex, ITGA3, DAXX and BLM. E1B-55K probably acts as the substrate-specific adapter of the SCF-like E3 ubiquitin ligase complex. Degradation of host TP53/p53 activity is essential for preventing E1A-induced TP53 accumulation that would otherwise lead to cell apoptosis and growth arrest. E1B-55K also inactivates TP53 transcription-factor activity by binding its transactivation domain. E1B-55K also functions as a SUMO1 E3 ligase for TP53 which causes the latter to be sequestered in promyelocytic leukemia (PML) nuclear bodies thereby contributing to maximal inhibition of TP53 function. The sequence is that of E1B 55 kDa protein from Human adenovirus F serotype 40 (HAdV-40).